The chain runs to 497 residues: DNA-dependent metalloprotease SPRTN (497 aa).

Met1 is subject to N-acetylmethionine. The SprT-like domain maps to Leu46–Ile213. His112 lines the Zn(2+) pocket. The active site involves Glu113. Positions 116 and 131 each coordinate Zn(2+). Position 231 is an N6-acetyllysine (Lys231). The SHP-box motif lies at Phe254–Gly262. The residue at position 269 (Ser269) is a Phosphoserine. A Glycyl lysine isopeptide (Lys-Gly) (interchain with G-Cter in SUMO2) cross-link involves residue Lys304. Positions Gln326 to Phe333 match the PIP-box motif. Lys342 is covalently cross-linked (Glycyl lysine isopeptide (Lys-Gly) (interchain with G-Cter in SUMO2); alternate). A Glycyl lysine isopeptide (Lys-Gly) (interchain with G-Cter in ubiquitin); alternate cross-link involves residue Lys342. The disordered stretch occupies residues Phe344–Gln459. A compositionally biased stretch (polar residues) spans Val347–Thr356. A Glycyl lysine isopeptide (Lys-Gly) (interchain with G-Cter in SUMO2) cross-link involves residue Lys362. Positions Thr383 to Ile404 are enriched in low complexity. The residue at position 384 (Ser384) is a Phosphoserine. Residues Asp413–Asp424 carry the Nuclear localization signal motif. Over residues Pro420–Lys432 the composition is skewed to basic and acidic residues. Lys432 is covalently cross-linked (Glycyl lysine isopeptide (Lys-Gly) (interchain with G-Cter in SUMO2)). Low complexity predominate over residues Arg442–Gln459. Residues Leu462 to Lys489 form a UBZ4-type zinc finger. Zn(2+) contacts are provided by Cys465, Cys468, His480, and Cys484.

Belongs to the Spartan family. In terms of assembly, homodimer. Interacts (VIA PIP-box) with PCNA (when ubiquitinated). Interacts (via its SHP-box) with VCP/p97. Interacts with RAD18. Interacts with KCTD13 and POLD3. Requires Zn(2+) as cofactor. Post-translationally, autocatalytically cleaved in response to double-stranded DNA-binding: autocatalytic cleavage takes place in trans and leads to inactivation. In terms of processing, monoubiquitinated; monoubiquitination promotes exclusion from chromatin. Deubiquitinated by VCPIP1: deubiquitination is required for subsequent acetylation and recruitment to chromatin and DNA damage sites. Acetylated following deubiquitination by VCPIP1, leading to recruitment to chromatin and DNA damage sites. Post-translationally, phosphorylation by CHEK1 promotes recruitment to chromatin.

It is found in the nucleus. The protein resides in the chromosome. With respect to regulation, DNA-binding activates the protease activity: single-stranded DNA-binding specifically activates ability to cleave covalent DNA-protein cross-links (DPCs). In contrast, double-stranded DNA-binding specifically activates autocatalytic cleavage, and subsequent inactivation. Its function is as follows. DNA-dependent metalloendopeptidase that mediates the proteolytic cleavage of covalent DNA-protein cross-links (DPCs) during DNA synthesis, thereby playing a key role in maintaining genomic integrity. DPCs are highly toxic DNA lesions that interfere with essential chromatin transactions, such as replication and transcription, and which are induced by reactive agents, such as UV light or formaldehyde. Associates with the DNA replication machinery and specifically removes DPCs during DNA synthesis. Catalyzes proteolytic cleavage of the HMCES DNA-protein cross-link following unfolding by the BRIP1/FANCJ helicase. Acts as a pleiotropic protease for DNA-binding proteins cross-linked with DNA, such as TOP1, TOP2A, histones H3 and H4. Mediates degradation of DPCs that are not ubiquitinated, while it is not able to degrade ubiquitinated DPCs. SPRTN activation requires polymerase collision with DPCs followed by helicase bypass of DPCs. Involved in recruitment of VCP/p97 to sites of DNA damage. Also acts as an activator of CHEK1 during normal DNA replication by mediating proteolytic cleavage of CHEK1, thereby promoting CHEK1 removal from chromatin and subsequent activation. Does not activate CHEK1 in response to DNA damage. May also act as a 'reader' of ubiquitinated PCNA: recruited to sites of UV damage and interacts with ubiquitinated PCNA and RAD18, the E3 ubiquitin ligase that monoubiquitinates PCNA. Facilitates chromatin association of RAD18 and is required for efficient PCNA monoubiquitination, promoting a feed-forward loop to enhance PCNA ubiquitination and translesion DNA synthesis. The protein is DNA-dependent metalloprotease SPRTN of Mus musculus (Mouse).